Consider the following 140-residue polypeptide: Ribonuclease P protein component (140 aa).

The segment at 115-140 (RCKPGAPKPPPFKKRPNKSVKSNKQT) is disordered.

The protein belongs to the RnpA family. Consists of a catalytic RNA component (M1 or rnpB) and a protein subunit.

It carries out the reaction Endonucleolytic cleavage of RNA, removing 5'-extranucleotides from tRNA precursor.. In terms of biological role, RNaseP catalyzes the removal of the 5'-leader sequence from pre-tRNA to produce the mature 5'-terminus. It can also cleave other RNA substrates such as 4.5S RNA. The protein component plays an auxiliary but essential role in vivo by binding to the 5'-leader sequence and broadening the substrate specificity of the ribozyme. The protein is Ribonuclease P protein component of Pseudoalteromonas translucida (strain TAC 125).